The primary structure comprises 478 residues: Glutamyl-tRNA(Gln) amidotransferase subunit A (478 aa).

Active-site charge relay system residues include Lys-72 and Ser-147. Ser-171 functions as the Acyl-ester intermediate in the catalytic mechanism.

Belongs to the amidase family. GatA subfamily. As to quaternary structure, heterotrimer of A, B and C subunits.

It catalyses the reaction L-glutamyl-tRNA(Gln) + L-glutamine + ATP + H2O = L-glutaminyl-tRNA(Gln) + L-glutamate + ADP + phosphate + H(+). Functionally, allows the formation of correctly charged Gln-tRNA(Gln) through the transamidation of misacylated Glu-tRNA(Gln) in organisms which lack glutaminyl-tRNA synthetase. The reaction takes place in the presence of glutamine and ATP through an activated gamma-phospho-Glu-tRNA(Gln). The sequence is that of Glutamyl-tRNA(Gln) amidotransferase subunit A from Saccharolobus solfataricus (strain ATCC 35092 / DSM 1617 / JCM 11322 / P2) (Sulfolobus solfataricus).